The sequence spans 517 residues: Crotonobetaine/carnitine--CoA ligase (517 aa).

Belongs to the ATP-dependent AMP-binding enzyme family.

The enzyme catalyses 4-(trimethylamino)butanoate + ATP + CoA = 4-(trimethylamino)butanoyl-CoA + AMP + diphosphate. It carries out the reaction crotonobetaine + ATP + CoA = crotonobetainyl-CoA + AMP + diphosphate. The catalysed reaction is (R)-carnitine + ATP + CoA = (R)-carnitinyl-CoA + AMP + diphosphate. It participates in amine and polyamine metabolism; carnitine metabolism. Its function is as follows. Catalyzes the transfer of CoA to carnitine, generating the initial carnitinyl-CoA needed for the CaiB reaction cycle. Also has activity toward crotonobetaine and gamma-butyrobetaine. This Salmonella paratyphi A (strain ATCC 9150 / SARB42) protein is Crotonobetaine/carnitine--CoA ligase.